Consider the following 128-residue polypeptide: Large ribosomal subunit protein bL17 (128 aa).

Belongs to the bacterial ribosomal protein bL17 family. As to quaternary structure, part of the 50S ribosomal subunit. Contacts protein L32.

This is Large ribosomal subunit protein bL17 from Petrotoga mobilis (strain DSM 10674 / SJ95).